Consider the following 549-residue polypeptide: Frizzled/smoothened-like sans CRD protein A (549 aa).

An N-terminal signal peptide occupies residues 1–22 (MKFNFKLILIILIINQILIINC). Residues 23-89 (KENKILEIYK…EVNTLSLMIK (67 aa)) lie on the Extracellular side of the membrane. N-linked (GlcNAc...) asparagine glycosylation is present at asparagine 63. Residues 90–110 (ITGTISFIASLILLLIYSPLI) traverse the membrane as a helical segment. Over 111–119 (NRMGYNRHT) the chain is Cytoplasmic. Residues 120–140 (IGIFFLTFSVFLIMLTDIIYV) traverse the membrane as a helical segment. The Extracellular segment spans residues 141 to 162 (HHGNDLICPQSHRYSRQNDSGC). Asparagine 158 is a glycosylation site (N-linked (GlcNAc...) asparagine). The helical transmembrane segment at 163–183 (TITGILFQYGCIAAVLFWATL) threads the bilayer. At 184–198 (SLDLYLTLKKISTKK) the chain is on the cytoplasmic side. Residues 199–219 (VEKWYLIILTLIALILTFVPL) form a helical membrane-spanning segment. Topologically, residues 220 to 241 (VKKSYGYLVTGLACWILDSTDQ) are extracellular. A helical membrane pass occupies residues 242–262 (IIFFWAPFTAILGIGSILIVL). The Cytoplasmic portion of the chain corresponds to 263 to 287 (VVYEIYKISKITKQNRGIFQSHIRP). A helical membrane pass occupies residues 288–308 (LLMVLFIFGQFLFILAFNALI). The Extracellular segment spans residues 309-346 (NNKYDEYSARMDSYIDCLFSSSSYSYLCRLKTFPFEME). Residues 347–367 (FIVLFFLRLIGIEVLIFYGFT) traverse the membrane as a helical segment. At 368–549 (QQTKKILLHS…NNNSNNDENN (182 aa)) the chain is on the cytoplasmic side. 2 stretches are compositionally biased toward low complexity: residues 417-474 (NNNN…SQQN) and 536-549 (NKNI…DENN). Disordered stretches follow at residues 417 to 483 (NNNN…QKLS) and 528 to 549 (QYEE…DENN). Residues 432 to 475 (NNLNNNLNNNNLNNNNNLNNLNNLNINNNLKNSQNNLNNSQQNE) adopt a coiled-coil conformation.

This sequence belongs to the G-protein coupled receptor Fz/Smo family.

Its subcellular location is the membrane. In Dictyostelium discoideum (Social amoeba), this protein is Frizzled/smoothened-like sans CRD protein A (fscA).